The chain runs to 84 residues: Dolichol phosphate-mannose biosynthesis regulatory protein (84 aa).

2 consecutive transmembrane segments (helical) span residues 11–31 (LGLVAVSLIIFTYYTAWVILL) and 49–69 (YAVAIPLAAGLLLLLFVGLFI).

Belongs to the DPM2 family. In terms of assembly, component of the dolichol-phosphate mannose (DPM) synthase complex composed of DPM1, DPM2 and DPM3; in the complex interacts directly with DPM3. Component of the glycosylphosphatidylinositol-N-acetylglucosaminyltransferase (GPI-GnT) complex composed at least by PIGA, PIGC, PIGH, PIGP, PIGQ, PIGY and DPM2. Interacts with PIGA, PIGC and PIGQ.

It localises to the endoplasmic reticulum membrane. It functions in the pathway protein modification; protein glycosylation. Its function is as follows. Regulates the biosynthesis of dolichol phosphate-mannose. Regulatory subunit of the dolichol-phosphate mannose (DPM) synthase complex; essential for the ER localization and stable expression of DPM1. Part of the glycosylphosphatidylinositol-N-acetylglucosaminyltransferase (GPI-GnT) complex that catalyzes the transfer of N-acetylglucosamine from UDP-N-acetylglucosamine to phosphatidylinositol and participates in the first step of GPI biosynthesis. May act by regulating the GPI-GNT complex. In Homo sapiens (Human), this protein is Dolichol phosphate-mannose biosynthesis regulatory protein.